The sequence spans 532 residues: Flavin-containing monooxygenase 3 (532 aa).

Residues 9–13, glutamate 32, 40–41, and 61–62 contribute to the FAD site; these read GAGVS, LW, and NS. Residues 60-61 and 195-198 contribute to the NADP(+) site; these read TN and SGCD. Position 401 is a phosphoserine (serine 401). Residues 512–532 form a helical membrane-spanning segment; that stretch reads CHLVKLFVLPVLFIAVFLALI.

Belongs to the FMO family. FAD is required as a cofactor.

The protein resides in the microsome membrane. The protein localises to the endoplasmic reticulum membrane. It carries out the reaction trimethylamine + NADPH + O2 = trimethylamine N-oxide + NADP(+) + H2O. The enzyme catalyses N,N-dimethylaniline + NADPH + O2 + H(+) = N,N-dimethylaniline N-oxide + NADP(+) + H2O. The catalysed reaction is hypotaurine + NADPH + O2 + H(+) = taurine + NADP(+) + H2O. It catalyses the reaction (S)-nicotine + NADPH + O2 = trans-(S)-nicotine N(1')-oxide + NADP(+) + H2O. It carries out the reaction albendazole + NADPH + O2 + H(+) = albendazole S-oxide + NADP(+) + H2O. Functionally, essential hepatic enzyme that catalyzes the oxygenation of a wide variety of nitrogen- and sulfur-containing compounds including drugs as well as dietary compounds. Plays an important role in the metabolism of trimethylamine (TMA), via the production of trimethylamine N-oxide (TMAO) metabolite. TMA is generated by the action of gut microbiota using dietary precursors such as choline, choline containing compounds, betaine or L-carnitine. By regulating TMAO concentration, FMO3 directly impacts both platelet responsiveness and rate of thrombus formation. The polypeptide is Flavin-containing monooxygenase 3 (FMO3) (Canis lupus familiaris (Dog)).